The sequence spans 190 residues: Lipocalin Can f 6.0101 (190 aa).

An N-terminal signal peptide occupies residues 1–15 (MKLLLLCLGLILVHA). The segment at 43 to 54 (SDIKEKIEENGS) is igE-binding. N-linked (GlcNAc...) asparagine glycans are attached at residues N52 and N67. The segment at 76–83 (TKVNGKCT) is igE-binding. C82 and C175 are disulfide-bonded. N-linked (GlcNAc...) asparagine glycosylation is present at N90. The igE-binding stretch occupies residues 91 to 97 (KTEKDGE). The tract at residues 100–109 (VVHDGYNLFR) is no IgE-binding. IgE-binding stretches follow at residues 125-132 (NVNQEQEF) and 139-152 (GRKP…KEKF).

The protein belongs to the calycin superfamily. Lipocalin family. Monomer. Expressed in saliva (at protein level). Expressed in dander (at protein level). According to PubMed:22104604, expressed in submaxillary gland. In contrast, according to PubMed:22515174, not expressed in submaxillary gland. Expressed in bladder and skin, but not in tongue.

It localises to the secreted. This is Lipocalin Can f 6.0101 from Canis lupus familiaris (Dog).